The following is a 141-amino-acid chain: Brain ribonuclease (141 aa).

The segment at lysine 1–tyrosine 25 is disordered. Substrate contacts are provided by lysine 7 and arginine 10. Histidine 12 serves as the catalytic Proton acceptor. The segment covering serine 15–asparagine 24 has biased composition (low complexity). Disulfide bonds link cysteine 26–cysteine 84, cysteine 40–cysteine 95, cysteine 58–cysteine 110, and cysteine 65–cysteine 72. A substrate-binding site is contributed by lysine 41–threonine 45. Asparagine 62 is a glycosylation site (N-linked (GlcNAc...) asparagine). Substrate is bound by residues lysine 66 and arginine 85. Residue histidine 119 is the Proton donor of the active site. Threonine 129 carries O-linked (GalNAc...) threonine glycosylation.

The protein belongs to the pancreatic ribonuclease family.

The protein localises to the secreted. This is Brain ribonuclease (BRN) from Giraffa camelopardalis (Giraffe).